The chain runs to 497 residues: Acetyl-coenzyme A carboxylase carboxyl transferase subunit beta, chloroplastic (497 aa).

The tract at residues 30–50 (GPVENTTVNEDPTRNDTDKNI) is disordered. Over residues 40–50 (DPTRNDTDKNI) the composition is skewed to basic and acidic residues. Residues 230–497 (VQCECENCYG…FFPLNQNSIK (268 aa)) form the CoA carboxyltransferase N-terminal domain. The Zn(2+) site is built by Cys-232, Cys-237, Cys-253, and Cys-256. The segment at 232–256 (CECENCYGVNYKKSLNSKMNICEQC) adopts a C4-type zinc-finger fold.

It belongs to the AccD/PCCB family. Acetyl-CoA carboxylase is a heterohexamer composed of biotin carboxyl carrier protein, biotin carboxylase and 2 subunits each of ACCase subunit alpha and ACCase plastid-coded subunit beta (accD). Zn(2+) serves as cofactor.

The protein localises to the plastid. It is found in the chloroplast stroma. It carries out the reaction N(6)-carboxybiotinyl-L-lysyl-[protein] + acetyl-CoA = N(6)-biotinyl-L-lysyl-[protein] + malonyl-CoA. It functions in the pathway lipid metabolism; malonyl-CoA biosynthesis; malonyl-CoA from acetyl-CoA: step 1/1. Component of the acetyl coenzyme A carboxylase (ACC) complex. Biotin carboxylase (BC) catalyzes the carboxylation of biotin on its carrier protein (BCCP) and then the CO(2) group is transferred by the transcarboxylase to acetyl-CoA to form malonyl-CoA. This Gossypium hirsutum (Upland cotton) protein is Acetyl-coenzyme A carboxylase carboxyl transferase subunit beta, chloroplastic.